We begin with the raw amino-acid sequence, 198 residues long: RNA pyrophosphohydrolase (198 aa).

In terms of domain architecture, Nudix hydrolase spans 6–149 (GYRPNVGIVI…KKEVYRKAMK (144 aa)). Positions 38–59 (GGINDNESAEQAMYRELFEEVG) match the Nudix box motif.

It belongs to the Nudix hydrolase family. RppH subfamily. The cofactor is a divalent metal cation.

Functionally, accelerates the degradation of transcripts by removing pyrophosphate from the 5'-end of triphosphorylated RNA, leading to a more labile monophosphorylated state that can stimulate subsequent ribonuclease cleavage. The chain is RNA pyrophosphohydrolase from Pasteurella multocida (strain Pm70).